A 238-amino-acid chain; its full sequence is ATP-dependent dethiobiotin synthetase BioD (238 aa).

Position 12–17 (12–17 (EVGKTV)) interacts with ATP. Thr-16 contacts Mg(2+). Residue Lys-37 is part of the active site. A substrate-binding site is contributed by Thr-41. ATP-binding positions include Asp-50, 109–112 (EGAG), 170–171 (GS), and 200–202 (PAG). The Mg(2+) site is built by Asp-50 and Glu-109.

This sequence belongs to the dethiobiotin synthetase family. Homodimer. The cofactor is Mg(2+).

The protein localises to the cytoplasm. The enzyme catalyses (7R,8S)-7,8-diammoniononanoate + CO2 + ATP = (4R,5S)-dethiobiotin + ADP + phosphate + 3 H(+). The protein operates within cofactor biosynthesis; biotin biosynthesis; biotin from 7,8-diaminononanoate: step 1/2. Its function is as follows. Catalyzes a mechanistically unusual reaction, the ATP-dependent insertion of CO2 between the N7 and N8 nitrogen atoms of 7,8-diaminopelargonic acid (DAPA, also called 7,8-diammoniononanoate) to form a ureido ring. This is ATP-dependent dethiobiotin synthetase BioD from Parafrankia sp. (strain EAN1pec).